We begin with the raw amino-acid sequence, 333 residues long: Ornithine carbamoyltransferase (333 aa).

Residues 56-59 (STRT), Gln-83, Arg-107, and 134-137 (HPTQ) contribute to the carbamoyl phosphate site. Residues Asn-167, Asp-231, and 235-236 (SM) each bind L-ornithine. Carbamoyl phosphate-binding positions include 273–274 (CL) and Arg-318.

Belongs to the aspartate/ornithine carbamoyltransferase superfamily. OTCase family.

It localises to the cytoplasm. The enzyme catalyses carbamoyl phosphate + L-ornithine = L-citrulline + phosphate + H(+). It participates in amino-acid biosynthesis; L-arginine biosynthesis; L-arginine from L-ornithine and carbamoyl phosphate: step 1/3. Functionally, has vitronectin and fibronectin-binding activity. Reversibly catalyzes the transfer of the carbamoyl group from carbamoyl phosphate (CP) to the N(epsilon) atom of ornithine (ORN) to produce L-citrulline. The protein is Ornithine carbamoyltransferase (argF) of Staphylococcus epidermidis (strain ATCC 12228 / FDA PCI 1200).